We begin with the raw amino-acid sequence, 251 residues long: Chlorocatechol 1,2-dioxygenase (251 aa).

Fe cation-binding residues include Tyr130, Tyr164, His188, and His190.

This sequence belongs to the intradiol ring-cleavage dioxygenase family. It depends on Fe(3+) as a cofactor.

It carries out the reaction 3-chlorocatechol + O2 = (2E,4Z)-2-chloromuconate + 2 H(+). It catalyses the reaction 3,4-dichlorocatechol + O2 = (2Z,4Z)-2,3-dichloromuconate + 2 H(+). The enzyme catalyses 3,5-dichlorocatechol + O2 = (2E,4E)-2,4-dichloromuconate + 2 H(+). The catalysed reaction is 3,6-dichlorocatechol + O2 = (2E,4E)-2,5-dichloromuconate + H(+). It carries out the reaction 3,4,6-trichlorocatechol + O2 = (2Z,4E)-2,3,5-trichloromuconate + H(+). It functions in the pathway xenobiotic degradation. Functionally, chlorocatechol 1,2-dioxygenase involved in the degradation of chlorinated benzenes, that occurs via chlorocatechol intermediates. Displays broad substrate specificity. Preferentially cleaves 3-chlorocatechol and 3,4-dichlorocatechol, and shows lower activity on 3,5-dichlorocatechol, 3,6-dichlorocatechol and 3,4,6-trichlorocatechol in vitro. Is not able to convert 3,4,5-trichlorocatechol and 3,4,5,6-tetrachlorocatechol. Thus, probably functions in the degradation pathways of 1,2-dichlorobenzene, 1,4-dichlorobenzene and 1,2,4-trichlorobenzene (via 3,4-dichlorocatechol, 3,6-dichlorocatechol and 3,4,6-trichlorocatechol intermediates, respectively), which allow Pseudomonas sp. strain P51 to grow on these substrates as the sole carbon and energy source. The chain is Chlorocatechol 1,2-dioxygenase from Pseudomonas sp. (strain P51).